Consider the following 1151-residue polypeptide: Semaphorin-5B (1151 aa).

The Extracellular segment spans residues 1–1036 (MPCGFSPSPV…TDCAGFNLIH (1036 aa)). Positions 103 to 553 (HPTVAFEDLQ…LRDGVLRVPL (451 aa)) constitute a Sema domain. N-linked (GlcNAc...) asparagine glycosylation occurs at Asn153. 2 disulfide bridges follow: Cys172–Cys182 and Cys199–Cys208. N-linked (GlcNAc...) asparagine glycans are attached at residues Asn236 and Asn345. 2 disulfides stabilise this stretch: Cys322/Cys425 and Cys346/Cys388. Residue Asn436 is glycosylated (N-linked (GlcNAc...) asparagine). The 48-residue stretch at 555–602 (RCAAYRSQGACLGARDPYCGWDGKQQRCSTLEDSSNMSLWTQNITACP) folds into the PSI domain. 2 TSP type-1 domains span residues 664–720 (NGAW…TPCP) and 722–771 (PIFW…EGCP). Cystine bridges form between Cys676/Cys713, Cys680/Cys719, Cys691/Cys703, Cys734/Cys765, Cys738/Cys770, and Cys749/Cys755. Thr788 carries O-linked (GalNAc...) threonine glycosylation. 3 TSP type-1 domains span residues 853-908 (SGGW…QACP), 910-965 (RGAW…QACP), and 966-1010 (EGWS…RPCP). 6 disulfides stabilise this stretch: Cys865–Cys902, Cys869–Cys907, Cys880–Cys892, Cys922–Cys959, Cys926–Cys964, and Cys937–Cys949. Residues 1037-1057 (LVATGISCFLGSGLLTLAVYL) traverse the membrane as a helical; Signal-anchor for type III membrane protein segment. Residues 1058–1151 (SCQHCQRQSQ…SPGQRCFPNS (94 aa)) are Cytoplasmic-facing.

Belongs to the semaphorin family.

Its subcellular location is the membrane. May act as a positive axonal guidance cue. The chain is Semaphorin-5B (SEMA5B) from Homo sapiens (Human).